A 2294-amino-acid polypeptide reads, in one-letter code: Protein Ycf2 (2294 aa).

G1635–S1642 is a binding site for ATP.

The protein belongs to the Ycf2 family.

The protein resides in the plastid. It is found in the chloroplast stroma. Its function is as follows. Probable ATPase of unknown function. Its presence in a non-photosynthetic plant (Epifagus virginiana) and experiments in tobacco indicate that it has an essential function which is probably not related to photosynthesis. This is Protein Ycf2 from Ranunculus macranthus (Large buttercup).